Reading from the N-terminus, the 211-residue chain is Major fimbrial subunit (211 aa).

An N-terminal signal peptide occupies residues 1–20 (MKKTLLGSLILLAFAGNVQA). The cysteines at positions 43 and 83 are disulfide-linked.

It belongs to the fimbrial protein family.

Its subcellular location is the fimbrium. Its function is as follows. Mediates adherence to oropharyngeal epithelial cells. Helps the airway colonization process. This chain is Major fimbrial subunit (hifA), found in Haemophilus influenzae.